Reading from the N-terminus, the 340-residue chain is Dihydroorotate dehydrogenase (quinone) (340 aa).

FMN is bound by residues 67 to 71 (AGFDK) and threonine 91. Lysine 71 contributes to the substrate binding site. Residue 116-120 (NRMGF) coordinates substrate. FMN-binding residues include asparagine 143 and asparagine 176. Asparagine 176 provides a ligand contact to substrate. Catalysis depends on serine 179, which acts as the Nucleophile. A substrate-binding site is contributed by asparagine 181. Positions 217 and 245 each coordinate FMN. 246–247 (NT) is a binding site for substrate. Residues glycine 267, glycine 296, and 317–318 (YT) contribute to the FMN site.

Belongs to the dihydroorotate dehydrogenase family. Type 2 subfamily. As to quaternary structure, monomer. It depends on FMN as a cofactor.

It is found in the cell membrane. The enzyme catalyses (S)-dihydroorotate + a quinone = orotate + a quinol. It functions in the pathway pyrimidine metabolism; UMP biosynthesis via de novo pathway; orotate from (S)-dihydroorotate (quinone route): step 1/1. Functionally, catalyzes the conversion of dihydroorotate to orotate with quinone as electron acceptor. This chain is Dihydroorotate dehydrogenase (quinone), found in Christiangramia forsetii (strain DSM 17595 / CGMCC 1.15422 / KT0803) (Gramella forsetii).